The following is a 328-amino-acid chain: L-lactate dehydrogenase (328 aa).

Residues V18, E39, K46, Y71, and G85–A86 contribute to the NAD(+) site. Substrate-binding residues include Q88 and R94. Residues S107, A124–N126, and S149 each bind NAD(+). A substrate-binding site is contributed by N126–D129. Substrate is bound at residue D154–R157. Beta-D-fructose 1,6-bisphosphate is bound by residues R159 and H174. The active-site Proton acceptor is H181. A Phosphotyrosine modification is found at Y226. T235 serves as a coordination point for substrate.

Belongs to the LDH/MDH superfamily. LDH family. Homotetramer.

It localises to the cytoplasm. The enzyme catalyses (S)-lactate + NAD(+) = pyruvate + NADH + H(+). Its pathway is fermentation; pyruvate fermentation to lactate; (S)-lactate from pyruvate: step 1/1. With respect to regulation, allosterically activated by fructose 1,6-bisphosphate (FBP). In terms of biological role, catalyzes the conversion of lactate to pyruvate. The chain is L-lactate dehydrogenase from Streptococcus pneumoniae (strain ATCC BAA-255 / R6).